Reading from the N-terminus, the 76-residue chain is Protein sigN132 (76 aa).

A compositionally biased stretch (polar residues) spans Met1–Lys13. The segment at Met1–Asn33 is disordered. A compositionally biased stretch (low complexity) spans Ser14–Asn33.

This Dictyostelium discoideum (Social amoeba) protein is Protein sigN132.